We begin with the raw amino-acid sequence, 251 residues long: Pyrroloquinoline-quinone synthase (251 aa).

Belongs to the PqqC family.

The catalysed reaction is 6-(2-amino-2-carboxyethyl)-7,8-dioxo-1,2,3,4,7,8-hexahydroquinoline-2,4-dicarboxylate + 3 O2 = pyrroloquinoline quinone + 2 H2O2 + 2 H2O + H(+). It participates in cofactor biosynthesis; pyrroloquinoline quinone biosynthesis. In terms of biological role, ring cyclization and eight-electron oxidation of 3a-(2-amino-2-carboxyethyl)-4,5-dioxo-4,5,6,7,8,9-hexahydroquinoline-7,9-dicarboxylic-acid to PQQ. This Cronobacter sakazakii (strain ATCC BAA-894) (Enterobacter sakazakii) protein is Pyrroloquinoline-quinone synthase.